The chain runs to 302 residues: F-box protein SKIP19 (302 aa).

In terms of domain architecture, F-box spans 16-63 (STNWTELPPELTSAILHRLGAIEILENAQKVCRSWRRVCKDPSMWRKI).

In terms of assembly, part of a SCF (ASK-cullin-F-box) protein ligase complex. Interacts with CUL1 and SPK1B/ASK2.

It is found in the nucleus. It functions in the pathway protein modification; protein ubiquitination. In terms of biological role, component of SCF(ASK-cullin-F-box) E3 ubiquitin ligase complexes, which may mediate the ubiquitination and subsequent proteasomal degradation of target proteins. The protein is F-box protein SKIP19 (SKIP19) of Arabidopsis thaliana (Mouse-ear cress).